A 250-amino-acid chain; its full sequence is tRNA (guanine-N(1)-)-methyltransferase (250 aa).

Residues G116 and 136-141 (IGDYVL) each bind S-adenosyl-L-methionine.

It belongs to the RNA methyltransferase TrmD family. As to quaternary structure, homodimer.

It localises to the cytoplasm. It catalyses the reaction guanosine(37) in tRNA + S-adenosyl-L-methionine = N(1)-methylguanosine(37) in tRNA + S-adenosyl-L-homocysteine + H(+). Its function is as follows. Specifically methylates guanosine-37 in various tRNAs. This Pseudomonas savastanoi pv. phaseolicola (strain 1448A / Race 6) (Pseudomonas syringae pv. phaseolicola (strain 1448A / Race 6)) protein is tRNA (guanine-N(1)-)-methyltransferase.